A 131-amino-acid polypeptide reads, in one-letter code: Profilin-2 (131 aa).

The protein belongs to the profilin family. In terms of assembly, occurs in many kinds of cells as a complex with monomeric actin in a 1:1 ratio. As to expression, expressed in the intestinal wall, the spermatheca, and the pharynx.

It is found in the cytoplasm. The protein localises to the cytoskeleton. Functionally, binds to actin and affects the structure of the cytoskeleton. At high concentrations, profilin prevents the polymerization of actin, whereas it enhances it at low concentrations. By binding to PIP2, it inhibits the formation of IP3 and DG. The polypeptide is Profilin-2 (pfn-2) (Caenorhabditis elegans).